The sequence spans 104 residues: Large ribosomal subunit protein uL24 (104 aa).

Belongs to the universal ribosomal protein uL24 family. In terms of assembly, part of the 50S ribosomal subunit.

In terms of biological role, one of two assembly initiator proteins, it binds directly to the 5'-end of the 23S rRNA, where it nucleates assembly of the 50S subunit. Its function is as follows. One of the proteins that surrounds the polypeptide exit tunnel on the outside of the subunit. The polypeptide is Large ribosomal subunit protein uL24 (Rhodopseudomonas palustris (strain BisB18)).